We begin with the raw amino-acid sequence, 118 residues long: Large ribosomal subunit protein uL24 (118 aa).

It belongs to the universal ribosomal protein uL24 family. Part of the 50S ribosomal subunit.

One of two assembly initiator proteins, it binds directly to the 5'-end of the 23S rRNA, where it nucleates assembly of the 50S subunit. Its function is as follows. One of the proteins that surrounds the polypeptide exit tunnel on the outside of the subunit. The protein is Large ribosomal subunit protein uL24 of Prochlorococcus marinus (strain SARG / CCMP1375 / SS120).